The primary structure comprises 311 residues: Pyrimidine-specific ribonucleoside hydrolase RihA (311 aa).

Residue His240 is part of the active site.

It belongs to the IUNH family. RihA subfamily.

Functionally, hydrolyzes cytidine or uridine to ribose and cytosine or uracil, respectively. This is Pyrimidine-specific ribonucleoside hydrolase RihA from Salmonella arizonae (strain ATCC BAA-731 / CDC346-86 / RSK2980).